Reading from the N-terminus, the 145-residue chain is Ponticulin-like protein B (145 aa).

Positions 1–22 (MLFIKSLLLLLSLIFAVSNATG) are cleaved as a signal peptide. N-linked (GlcNAc...) asparagine glycosylation occurs at Asn-34. A disordered region spans residues 107–126 (DTTSSSTSPSSTSPSSTSPA). A compositionally biased stretch (low complexity) spans 108-126 (TTSSSTSPSSTSPSSTSPA). Ser-117 carries the GPI-like-anchor amidated serine lipid modification. A propeptide spans 118 to 145 (TSPSSTSPASTLIGSIAFVTLAALFALI) (removed in mature form).

Belongs to the ponticulin family. Post-translationally, the GPI-like-anchor contains a phosphoceramide group, rather than a phosphatidyl group.

It is found in the cell membrane. In terms of biological role, binds F-actin and nucleates actin assembly. This Dictyostelium discoideum (Social amoeba) protein is Ponticulin-like protein B (ponB).